The primary structure comprises 408 residues: LL-diaminopimelate aminotransferase (408 aa).

Positions 15 and 42 each coordinate substrate. Pyridoxal 5'-phosphate contacts are provided by residues Tyr72, 108–109 (SK), Tyr132, Asn187, Tyr218, and 246–248 (SFS). Residues Lys109, Tyr132, and Asn187 each contribute to the substrate site. At Lys249 the chain carries N6-(pyridoxal phosphate)lysine. Pyridoxal 5'-phosphate is bound by residues Arg257 and Asn292. 2 residues coordinate substrate: Asn292 and Arg388.

It belongs to the class-I pyridoxal-phosphate-dependent aminotransferase family. LL-diaminopimelate aminotransferase subfamily. In terms of assembly, homodimer. The cofactor is pyridoxal 5'-phosphate.

The enzyme catalyses (2S,6S)-2,6-diaminopimelate + 2-oxoglutarate = (S)-2,3,4,5-tetrahydrodipicolinate + L-glutamate + H2O + H(+). It functions in the pathway amino-acid biosynthesis; L-lysine biosynthesis via DAP pathway; LL-2,6-diaminopimelate from (S)-tetrahydrodipicolinate (aminotransferase route): step 1/1. In terms of biological role, involved in the synthesis of meso-diaminopimelate (m-DAP or DL-DAP), required for both lysine and peptidoglycan biosynthesis. Catalyzes the direct conversion of tetrahydrodipicolinate to LL-diaminopimelate. The chain is LL-diaminopimelate aminotransferase from Leptospira borgpetersenii serovar Hardjo-bovis (strain JB197).